Reading from the N-terminus, the 231-residue chain is Aquaporin Z (231 aa).

A run of 2 helical transmembrane segments spans residues 9-29 and 34-54; these read LLGT…AAAF and IGFV…IYAV. An NPA 1 motif is present at residues 63–65; it reads NPA. 3 helical membrane passes run 82 to 102, 133 to 153, and 160 to 180; these read IPYI…LYVI, SAIV…IGAT, and GFAP…SIPI. The NPA 2 signature appears at 186–188; sequence NPA. A helical transmembrane segment spans residues 202-222; it reads LEQLWFFWVMPIIGGIVGGGI.

Belongs to the MIP/aquaporin (TC 1.A.8) family. In terms of assembly, homotetramer.

The protein resides in the cell inner membrane. It catalyses the reaction H2O(in) = H2O(out). Its function is as follows. Channel that permits osmotically driven movement of water in both directions. It is involved in the osmoregulation and in the maintenance of cell turgor during volume expansion in rapidly growing cells. It mediates rapid entry or exit of water in response to abrupt changes in osmolarity. This is Aquaporin Z from Photorhabdus laumondii subsp. laumondii (strain DSM 15139 / CIP 105565 / TT01) (Photorhabdus luminescens subsp. laumondii).